The sequence spans 764 residues: MDSSGTDSAKELHVGLDPTTEEEYATQSKLLQEFINIPSIDKAWIFNSDSGSQAMFALSQANLLANKKKKFMLSGHISNESNQSVNFHWAPFPIEMTGASAFVPSPSGLKLLVIRNPENESPTKFEIWNSSQLEKEFHIPQKVHGSVYVDGWFEGISWDSDETHVAYVAEEPSRPKPTFDHLGYYKKENSLDKGIGSWKGEGDWEEEWGEAYAGKRQPALFVINVDSGEVEPIKGIPRSISVGQVVWSPNSNGSAQYLVFAGWLGDKRKFGIKYCYNRPCAIYAIKFTSDEPKDDDANEFPIHNLTKSISSGFCPRFSKDGKFLVFVSAKTAVDSGAHWATESLHRIDWPSDGKLPESTNIVDVIQVVNCPKDGCFPGLYVTGLLSDPWLSDGHSLMLSTYWRSCRVILSVNLLSGEVSRASPSDSDYSWNALALDGDSIVAVSSSPVSVPEIKYGKKGLDSAGKPSWLWSNIQSPIRYSEKVMAGLSSLQFKILKVPISDVSEGLAEGAKNPIEAIYVSSSKSKENGKCDPLIAVLHGGPHSVSPCSFSRTMAYLSSIGYSQLIINYRGSLGYGEDALQSLPGKVGSQDVKDCLLAVDHAIEMGIADPSRITVLGGSHGGFLTTHLIGQAPDKFVAAAARNPVCNMASMVGITDIPDWCFFEAYGDQSHYTEAPSAEDLSRFHQMSPISHISKVKTPTLFLLGTKDLRVPISNGFQYVRALKEKGVEVKVLVFPNDNHPLDRPQTDYESFLNIAVWFNKYCKL.

Active-site charge relay system residues include serine 618, aspartate 707, and histidine 739.

Belongs to the peptidase S9C family. Homotetramer.

It localises to the cytoplasm. Its subcellular location is the nucleus. It catalyses the reaction Cleavage of an N-acetyl or N-formyl amino acid from the N-terminus of a polypeptide.. Its activity is regulated as follows. Strongly inhibited by the serine protease inhibitor diisopropyl fluorophosphate. Functionally, catalyzes the hydrolysis of the N-terminal peptide bond of an N-acetylated peptide to generate an N-acetylated amino acid and a peptide with a free N-terminus. Can degrade the glycated RuBisCO (ribulose-1,5-bisphosphate carboxylase/oxygenase) protein but not the native protein. May be involved in the elimination of glycated proteins. Plays a homeostatic role in sustaining the cytoplasmic antioxidative system. May contribute to the elimination of the oxidized proteins in the cytoplasm. In Arabidopsis thaliana (Mouse-ear cress), this protein is Acylamino-acid-releasing enzyme.